The sequence spans 485 residues: Amyloid beta A4 precursor protein-binding family B member 1-interacting protein (485 aa).

Residues 84 to 107 are compositionally biased toward polar residues; the sequence is QAQKTSGNQQSVVTQPSTGTNNDF. Residues 84–157 are disordered; the sequence is QAQKTSGNQQ…LSQEEQEARA (74 aa). The span at 125–147 shows a compositional bias: pro residues; the sequence is LPPPPPAPDLDLPPPPPPPPPEP. The region spanning 175–262 is the Ras-associating domain; the sequence is KKLVVKVHMY…KVLFLEKKEK (88 aa). The PH domain occupies 305-414; the sequence is VPELEGALYL…WVTGIRIAKY (110 aa).

It belongs to the MRL family.

It is found in the cell membrane. The protein localises to the cytoplasm. Its subcellular location is the cytoskeleton. Its function is as follows. Appears to function in the signal transduction from Ras activation to actin cytoskeletal remodeling. This Gallus gallus (Chicken) protein is Amyloid beta A4 precursor protein-binding family B member 1-interacting protein (APBB1IP).